The primary structure comprises 357 residues: Phosphoserine aminotransferase (357 aa).

An L-glutamate-binding site is contributed by Arg41. Pyridoxal 5'-phosphate-binding positions include 76 to 77 (GT), Trp102, Thr152, Asp171, and Gln194. Lys195 bears the N6-(pyridoxal phosphate)lysine mark. 235–236 (NT) lines the pyridoxal 5'-phosphate pocket.

This sequence belongs to the class-V pyridoxal-phosphate-dependent aminotransferase family. SerC subfamily. Homodimer. The cofactor is pyridoxal 5'-phosphate.

Its subcellular location is the cytoplasm. It carries out the reaction O-phospho-L-serine + 2-oxoglutarate = 3-phosphooxypyruvate + L-glutamate. It catalyses the reaction 4-(phosphooxy)-L-threonine + 2-oxoglutarate = (R)-3-hydroxy-2-oxo-4-phosphooxybutanoate + L-glutamate. It participates in amino-acid biosynthesis; L-serine biosynthesis; L-serine from 3-phospho-D-glycerate: step 2/3. In terms of biological role, catalyzes the reversible conversion of 3-phosphohydroxypyruvate to phosphoserine and of 3-hydroxy-2-oxo-4-phosphonooxybutanoate to phosphohydroxythreonine. This is Phosphoserine aminotransferase from Limosilactobacillus fermentum (strain NBRC 3956 / LMG 18251) (Lactobacillus fermentum).